Here is a 735-residue protein sequence, read N- to C-terminus: Ion-translocating oxidoreductase complex subunit C (735 aa).

2 consecutive 4Fe-4S ferredoxin-type domains span residues 368-397 (MGAP…QQLY) and 407-436 (KATA…VQYF). [4Fe-4S] cluster is bound by residues Cys377, Cys380, Cys383, Cys387, Cys416, Cys419, Cys422, and Cys426. Positions 562 to 713 (AIARAKARKQ…AEPADPRKAA (152 aa)) are disordered.

The protein belongs to the 4Fe4S bacterial-type ferredoxin family. RnfC subfamily. In terms of assembly, the complex is composed of six subunits: RsxA, RsxB, RsxC, RsxD, RsxE and RsxG. It depends on [4Fe-4S] cluster as a cofactor.

It is found in the cell inner membrane. Functionally, part of a membrane-bound complex that couples electron transfer with translocation of ions across the membrane. Required to maintain the reduced state of SoxR. The polypeptide is Ion-translocating oxidoreductase complex subunit C (Salmonella newport (strain SL254)).